A 401-amino-acid polypeptide reads, in one-letter code: Argininosuccinate synthase (401 aa).

ATP contacts are provided by residues 7 to 15 and Ala34; that span reads AYSGGLDTS. 2 residues coordinate L-citrulline: Tyr85 and Ser90. Residue Gly115 coordinates ATP. Residues Thr117, Asn121, and Asp122 each coordinate L-aspartate. Asn121 contacts L-citrulline. Arg125, Ser174, Ser183, Glu259, and Tyr271 together coordinate L-citrulline.

It belongs to the argininosuccinate synthase family. Type 1 subfamily. Homotetramer.

The protein localises to the cytoplasm. It carries out the reaction L-citrulline + L-aspartate + ATP = 2-(N(omega)-L-arginino)succinate + AMP + diphosphate + H(+). It participates in amino-acid biosynthesis; L-arginine biosynthesis; L-arginine from L-ornithine and carbamoyl phosphate: step 2/3. This Desulforamulus reducens (strain ATCC BAA-1160 / DSM 100696 / MI-1) (Desulfotomaculum reducens) protein is Argininosuccinate synthase.